Here is a 556-residue protein sequence, read N- to C-terminus: Arginine--tRNA ligase (556 aa).

The 'HIGH' region motif lies at 130-140 (ANPTGPIHLGG).

The protein belongs to the class-I aminoacyl-tRNA synthetase family. As to quaternary structure, monomer.

Its subcellular location is the cytoplasm. It catalyses the reaction tRNA(Arg) + L-arginine + ATP = L-arginyl-tRNA(Arg) + AMP + diphosphate. This is Arginine--tRNA ligase from Corynebacterium jeikeium (strain K411).